The sequence spans 181 residues: Peptidyl-tRNA hydrolase (181 aa).

Tyr14 lines the tRNA pocket. His19 acts as the Proton acceptor in catalysis. The tRNA site is built by Phe60, Asn62, and Asn106.

The protein belongs to the PTH family. In terms of assembly, monomer.

It localises to the cytoplasm. The enzyme catalyses an N-acyl-L-alpha-aminoacyl-tRNA + H2O = an N-acyl-L-amino acid + a tRNA + H(+). In terms of biological role, hydrolyzes ribosome-free peptidyl-tRNAs (with 1 or more amino acids incorporated), which drop off the ribosome during protein synthesis, or as a result of ribosome stalling. Catalyzes the release of premature peptidyl moieties from peptidyl-tRNA molecules trapped in stalled 50S ribosomal subunits, and thus maintains levels of free tRNAs and 50S ribosomes. This is Peptidyl-tRNA hydrolase from Campylobacter curvus (strain 525.92).